The sequence spans 502 residues: MFTLQEICRKNIYFLPDWLNEHVAQRLGLYWEKHGSLQRIGDDYVLIQQDLIISINEALRMAGEEGNDEVVQLLLQWEGNIFYAIIGALEGDHDSLAYKLYSQIRDCHTILPLIQDPKIFEKCHDLDESCNISCLVLNAVKHDMLCILQEYKMLLSGGDIQEVFEIACRSLKYDIVTWMGQNIAIYNPGVIFDIAFDKMNVSLLSIGYTLLFNHHINHINHENIDVNSLLTQHLEWAAGMGLLHFMLETLKYGGDVTIIVLSAAVKYDHRKVLDYFLRRKNLYREDIEELLLLAISADCSKKTLNLLLSYLNYSIDNIRKKILQYVKEYETTLIIKILWKKKKINLIEPILADFIGYHSYTYMKGFMRDFSIHPERIIKMAARESREDLIIKFSKNVCKEPKDRLHYLKNLVYTMKHKGGKQLLIYTIHNLYKASCLESKEMFKLARFYARHDARIQFKSICHDLSKQNINIKNLLLECLGIAIKKNYFQLIETIEMTMNYE.

This sequence belongs to the asfivirus MGF 505 family.

In terms of biological role, plays a role in virus cell tropism, and may be required for efficient virus replication in macrophages. This chain is Protein MGF 505-5R, found in African swine fever virus (isolate Tick/Malawi/Lil 20-1/1983) (ASFV).